Reading from the N-terminus, the 208-residue chain is Small ribosomal subunit protein uS4 (208 aa).

The S4 RNA-binding domain occupies 97-160; it reads TRLDNVCYRM…QKQLRVQEAL (64 aa).

The protein belongs to the universal ribosomal protein uS4 family. As to quaternary structure, part of the 30S ribosomal subunit. Contacts protein S5. The interaction surface between S4 and S5 is involved in control of translational fidelity.

In terms of biological role, one of the primary rRNA binding proteins, it binds directly to 16S rRNA where it nucleates assembly of the body of the 30S subunit. With S5 and S12 plays an important role in translational accuracy. This chain is Small ribosomal subunit protein uS4, found in Xanthomonas oryzae pv. oryzae (strain MAFF 311018).